Consider the following 246-residue polypeptide: tRNA (guanine-N(1)-)-methyltransferase (246 aa).

S-adenosyl-L-methionine is bound by residues Gly-113 and 133 to 138 (IGDYVL).

Belongs to the RNA methyltransferase TrmD family. In terms of assembly, homodimer.

It localises to the cytoplasm. The catalysed reaction is guanosine(37) in tRNA + S-adenosyl-L-methionine = N(1)-methylguanosine(37) in tRNA + S-adenosyl-L-homocysteine + H(+). Specifically methylates guanosine-37 in various tRNAs. This chain is tRNA (guanine-N(1)-)-methyltransferase, found in Haemophilus influenzae (strain 86-028NP).